Consider the following 261-residue polypeptide: Cytochrome c oxidase subunit 3 (261 aa).

At 1–15 (MTHQLHAYHMVKPSP) the chain is on the mitochondrial matrix side. A helical membrane pass occupies residues 16-34 (WPLTGALSAFLLTSGLIMW). Topologically, residues 35-40 (FHFYST) are mitochondrial intermembrane. Residues 41–66 (ALLTLGLLTNVLTMYQWWRDIIREST) form a helical membrane-spanning segment. At 67 to 72 (YQGHHT) the chain is on the mitochondrial matrix side. Residues 73 to 105 (TPVQKSLRYGMTLFIISEVFFFAGFFWAFYHSS) form a helical membrane-spanning segment. Topologically, residues 106 to 128 (LAPTPRLGCHWPPTGITPLNPLE) are mitochondrial intermembrane. The chain crosses the membrane as a helical span at residues 129–152 (VPLLNTSVLLASGVTITWAHHSLM). Residues 153–155 (NGN) are Mitochondrial matrix-facing. A helical transmembrane segment spans residues 156-183 (RKQTIQALLITILLGTYFTLVQISEYFE). At 184 to 190 (APFTISD) the chain is on the mitochondrial intermembrane side. The chain crosses the membrane as a helical span at residues 191–223 (GIYGSTFFVATGFHGLHVIIGSTFLLICLIRQL). Topologically, residues 224-232 (FYHFTPSHH) are mitochondrial matrix. A helical membrane pass occupies residues 233–256 (FGFEAAAWYWHFVDVIWLFLYISI). Over 257 to 261 (YWWGS) the chain is Mitochondrial intermembrane.

The protein belongs to the cytochrome c oxidase subunit 3 family. In terms of assembly, component of the cytochrome c oxidase (complex IV, CIV), a multisubunit enzyme composed of 14 subunits. The complex is composed of a catalytic core of 3 subunits MT-CO1, MT-CO2 and MT-CO3, encoded in the mitochondrial DNA, and 11 supernumerary subunits COX4I, COX5A, COX5B, COX6A, COX6B, COX6C, COX7A, COX7B, COX7C, COX8 and NDUFA4, which are encoded in the nuclear genome. The complex exists as a monomer or a dimer and forms supercomplexes (SCs) in the inner mitochondrial membrane with NADH-ubiquinone oxidoreductase (complex I, CI) and ubiquinol-cytochrome c oxidoreductase (cytochrome b-c1 complex, complex III, CIII), resulting in different assemblies (supercomplex SCI(1)III(2)IV(1) and megacomplex MCI(2)III(2)IV(2)).

Its subcellular location is the mitochondrion inner membrane. The enzyme catalyses 4 Fe(II)-[cytochrome c] + O2 + 8 H(+)(in) = 4 Fe(III)-[cytochrome c] + 2 H2O + 4 H(+)(out). Its function is as follows. Component of the cytochrome c oxidase, the last enzyme in the mitochondrial electron transport chain which drives oxidative phosphorylation. The respiratory chain contains 3 multisubunit complexes succinate dehydrogenase (complex II, CII), ubiquinol-cytochrome c oxidoreductase (cytochrome b-c1 complex, complex III, CIII) and cytochrome c oxidase (complex IV, CIV), that cooperate to transfer electrons derived from NADH and succinate to molecular oxygen, creating an electrochemical gradient over the inner membrane that drives transmembrane transport and the ATP synthase. Cytochrome c oxidase is the component of the respiratory chain that catalyzes the reduction of oxygen to water. Electrons originating from reduced cytochrome c in the intermembrane space (IMS) are transferred via the dinuclear copper A center (CU(A)) of subunit 2 and heme A of subunit 1 to the active site in subunit 1, a binuclear center (BNC) formed by heme A3 and copper B (CU(B)). The BNC reduces molecular oxygen to 2 water molecules using 4 electrons from cytochrome c in the IMS and 4 protons from the mitochondrial matrix. This chain is Cytochrome c oxidase subunit 3 (MT-CO3), found in Papio hamadryas (Hamadryas baboon).